The primary structure comprises 396 residues: ATP-dependent RNA helicase eIF4A (396 aa).

The Q motif motif lies at 23-51 (YEFDDMNLNEKLLRGVFGYGFNKPSAIQQ). The 170-residue stretch at 54-223 (IMPIIEGNDV…AKFMQNPVRI (170 aa)) folds into the Helicase ATP-binding domain. Residue 67-74 (AQSGTGKT) coordinates ATP. Positions 171-174 (DEAD) match the DEAD box motif. In terms of domain architecture, Helicase C-terminal spans 234–395 (GIKQFYVNVE…ELPSDIGTLF (162 aa)).

The protein belongs to the DEAD box helicase family. eIF4A subfamily. In terms of assembly, component of the eIF4F complex, which composition varies with external and internal environmental conditions. It is composed of at least eIF4A, eIF4E and eIF4G.

The protein localises to the cytoplasm. It carries out the reaction ATP + H2O = ADP + phosphate + H(+). In terms of biological role, ATP-dependent RNA helicase which is a subunit of the eIF4F complex involved in cap recognition and is required for mRNA binding to ribosome. In the current model of translation initiation, eIF4A unwinds RNA secondary structures in the 5'-UTR of mRNAs which is necessary to allow efficient binding of the small ribosomal subunit, and subsequent scanning for the initiator codon. In Candida glabrata (strain ATCC 2001 / BCRC 20586 / JCM 3761 / NBRC 0622 / NRRL Y-65 / CBS 138) (Yeast), this protein is ATP-dependent RNA helicase eIF4A (TIF1).